Consider the following 534-residue polypeptide: NAD(P)H-quinone oxidoreductase chain 4 1 (534 aa).

Transmembrane regions (helical) follow at residues 6 to 26 (IPWL…IPLI), 34 to 54 (IRWY…TAFW), 87 to 107 (LSMP…LAAW), 113 to 133 (PKLF…VFAV), 136 to 156 (LLLF…LISI), 169 to 189 (FILY…ALAF), 209 to 229 (ALEL…LPIF), 243 to 263 (SAPV…YGLI), 277 to 297 (FAPL…LTAF), 311 to 331 (ISHM…GMNG), 332 to 352 (AVLQ…LSGV), 376 to 396 (FAMF…SGFV), 418 to 438 (IAIF…LSML), and 464 to 484 (IFVA…PKLA).

Belongs to the complex I subunit 4 family.

The protein localises to the cellular thylakoid membrane. The enzyme catalyses a plastoquinone + NADH + (n+1) H(+)(in) = a plastoquinol + NAD(+) + n H(+)(out). It carries out the reaction a plastoquinone + NADPH + (n+1) H(+)(in) = a plastoquinol + NADP(+) + n H(+)(out). Its function is as follows. NDH-1 shuttles electrons from NAD(P)H, via FMN and iron-sulfur (Fe-S) centers, to quinones in the respiratory chain. The immediate electron acceptor for the enzyme in this species is believed to be plastoquinone. Couples the redox reaction to proton translocation (for every two electrons transferred, four hydrogen ions are translocated across the cytoplasmic membrane), and thus conserves the redox energy in a proton gradient. The chain is NAD(P)H-quinone oxidoreductase chain 4 1 from Picosynechococcus sp. (strain ATCC 27264 / PCC 7002 / PR-6) (Agmenellum quadruplicatum).